Reading from the N-terminus, the 155-residue chain is MKLQLVAVGTKMPDWVQTGFTEYLRRFPKDMPFELIEIPAGKRGKNADIKRILDKEGEQMLAAAGKNRIVTLDIPGKPWDTPQLANELERWKQDGRDVSLLIGGPEGLSPACKAAAEQSWSLSALTLPHPLVRVLVAESLYRAWSITTNHPYHRE.

S-adenosyl-L-methionine-binding positions include L72, G103, and 122-127 (LSALTL).

It belongs to the RNA methyltransferase RlmH family. As to quaternary structure, homodimer.

It localises to the cytoplasm. It catalyses the reaction pseudouridine(1915) in 23S rRNA + S-adenosyl-L-methionine = N(3)-methylpseudouridine(1915) in 23S rRNA + S-adenosyl-L-homocysteine + H(+). Functionally, specifically methylates the pseudouridine at position 1915 (m3Psi1915) in 23S rRNA. In Salmonella dublin (strain CT_02021853), this protein is Ribosomal RNA large subunit methyltransferase H.